Consider the following 111-residue polypeptide: Distal membrane-arm assembly complex protein 1 (111 aa).

The segment covering 1–11 (MGSSFSGSTEF) has biased composition (polar residues). The segment at 1-40 (MGSSFSGSTEFSAPAPPTVSTAVPANPPAKSAVPASPARD) is disordered. Positions 18-38 (TVSTAVPANPPAKSAVPASPA) are enriched in low complexity. 2 helical membrane-spanning segments follow: residues 51–68 (VLSG…YLVA) and 81–101 (GTVL…VVLV).

Interacts with incompletely assembled mitochondrial NADH:ubiquinone oxidoreductase complex (complex I).

The protein localises to the mitochondrion inner membrane. Required for the assembly of the mitochondrial NADH:ubiquinone oxidoreductase complex (complex I). Involved in the assembly of the distal region of complex I. This is Distal membrane-arm assembly complex protein 1 from Mus musculus (Mouse).